The chain runs to 320 residues: MEGAPHGCPGADSAQAGRGASCQGCPNQKLCASGAGAAPDPAVEEIREKMKTVRHRILVLSGKGGVGKSTFSAHLAHGLAEDGDTQVALLDIDICGPSIPKIMGLEGEQVHQSGSGWSPVYVEDNLGVMSVGFLLSSPDDAVIWRGPKKNGMIKQFLRDVDWGDVDYLVIDTPPGTSDEHLSVVQYLAAAHIDGAVILTTPQEVALQDVRKEISFCHKVKLPIIGVVENMSGFICPKCKRESQIFPPTTGGAEAMCQALKIPLLGKVPLDPHIGKSCDKGQSFFVEAPDSPATAAYKSIIQRIREFCNSRQSHDENLISP.

Position 1 is an N-acetylmethionine (methionine 1). [4Fe-4S] cluster contacts are provided by cysteine 8, cysteine 22, cysteine 25, and cysteine 31. 62–69 is a binding site for ATP; the sequence is GKGGVGKS. The [4Fe-4S] cluster site is built by cysteine 235 and cysteine 238. A Phosphoserine modification is found at serine 319.

This sequence belongs to the Mrp/NBP35 ATP-binding proteins family. NUBP1/NBP35 subfamily. In terms of assembly, heterotetramer of 2 NUBP1 and 2 NUBP2 chains. Interacts with KIFC1. Interacts with the BBS/CCT complex subunit CCT1. The cofactor is [4Fe-4S] cluster.

It localises to the cytoplasm. Its subcellular location is the nucleus. It is found in the cell projection. The protein localises to the cytoskeleton. The protein resides in the cilium axoneme. It localises to the cilium basal body. Its subcellular location is the microtubule organizing center. It is found in the centrosome. The protein localises to the centriole. In terms of biological role, component of the cytosolic iron-sulfur (Fe/S) protein assembly (CIA) machinery. Required for maturation of extramitochondrial Fe-S proteins. The NUBP1-NUBP2 heterotetramer forms a Fe-S scaffold complex, mediating the de novo assembly of an Fe-S cluster and its transfer to target apoproteins. Implicated in the regulation of centrosome duplication. Negatively regulates cilium formation and structure. The polypeptide is Cytosolic Fe-S cluster assembly factor NUBP1 (Rattus norvegicus (Rat)).